A 141-amino-acid chain; its full sequence is Hemoglobin subunit alpha (141 aa).

The Globin domain maps to 1–141; it reads VLSPGDKSNI…VSTVLTSKYR (141 aa). Phosphoserine is present on Ser-3. 2 positions are modified to N6-succinyllysine: Lys-7 and Lys-11. Residue Lys-16 is modified to N6-acetyllysine; alternate. An N6-succinyllysine; alternate modification is found at Lys-16. The residue at position 24 (Tyr-24) is a Phosphotyrosine. Phosphoserine is present on Ser-35. The residue at position 40 (Lys-40) is an N6-succinyllysine. A Phosphoserine modification is found at Ser-49. His-58 serves as a coordination point for O2. A heme b-binding site is contributed by His-87. A Phosphoserine modification is found at Ser-102. Residue Thr-108 is modified to Phosphothreonine. Position 124 is a phosphoserine (Ser-124). Residues Thr-134 and Thr-137 each carry the phosphothreonine modification. Ser-138 carries the post-translational modification Phosphoserine.

The protein belongs to the globin family. Heterotetramer of two alpha chains and two beta chains. Red blood cells.

Functionally, involved in oxygen transport from the lung to the various peripheral tissues. In terms of biological role, hemopressin acts as an antagonist peptide of the cannabinoid receptor CNR1. Hemopressin-binding efficiently blocks cannabinoid receptor CNR1 and subsequent signaling. The protein is Hemoglobin subunit alpha (HBA) of Tupaia glis (Common tree shrew).